The sequence spans 143 residues: Boletus edulis lectin (143 aa).

Beta-D-Gal-(1-&gt;3)-alpha-D-GalNAc is bound by residues Ala-30, 49 to 50 (SG), and 72 to 73 (HN). Residues 49-50 (SG) and 72-73 (HN) contribute to the N-acetyl-alpha-D-galactosamine site. N,N'-diacetylchitobiose-binding positions include 79 to 82 (DVVT), Arg-103, and Tyr-114. Residues 79-82 (DVVT), Arg-103, and Tyr-114 contribute to the N-acetyl-alpha-D-glucosamine site.

It belongs to the fungal fruit body lectin family. In terms of assembly, homotetramer.

Functionally, lectin that recognizes O-linked galactose-beta-1,3-N-acetylgalactosamine, a disaccharide (Thomsen-Friedenreich antigen or T-disaccharide), present on cell surface glycoproteins. Can also bind chitin, N,N'-diacetylchitobiose, N-acetylgalactosamine and N-acetylglucosamine. Inhibits proliferation of colon, breast and liver cancer cell lines (in vitro). This is Boletus edulis lectin from Boletus edulis (King bolete).